The chain runs to 295 residues: Small ribosomal subunit protein uS2 (295 aa).

The protein belongs to the universal ribosomal protein uS2 family. Component of the small ribosomal subunit. Mature ribosomes consist of a small (40S) and a large (60S) subunit. The 40S subunit contains about 33 different proteins and 1 molecule of RNA (18S). The 60S subunit contains about 49 different proteins and 3 molecules of RNA (25S, 5.8S and 5S). Interacts with RPS21.

The protein localises to the cytoplasm. Required for the assembly and/or stability of the 40S ribosomal subunit. Required for the processing of the 20S rRNA-precursor to mature 18S rRNA in a late step of the maturation of 40S ribosomal subunits. This chain is Small ribosomal subunit protein uS2, found in Paracoccidioides brasiliensis (strain Pb18).